The following is a 288-amino-acid chain: Alpha/beta hydrolase domain-containing protein 17B (288 aa).

Residues serine 170, aspartate 235, and histidine 264 each act as charge relay system in the active site.

This sequence belongs to the AB hydrolase superfamily. ABHD17 family. Post-translationally, palmitoylated on cysteine residues located in a cysteine cluster at the N-terminus which promotes membrane localization.

The protein resides in the cell membrane. It localises to the recycling endosome membrane. It is found in the cell projection. The protein localises to the dendritic spine. Its subcellular location is the postsynaptic density membrane. The enzyme catalyses S-hexadecanoyl-L-cysteinyl-[protein] + H2O = L-cysteinyl-[protein] + hexadecanoate + H(+). Hydrolyzes fatty acids from S-acylated cysteine residues in proteins. The chain is Alpha/beta hydrolase domain-containing protein 17B from Xenopus tropicalis (Western clawed frog).